The following is a 121-amino-acid chain: Conopressin-conophysin (121 aa).

A signal peptide spans 1–20 (MGRLTMALCWLLLLLLTTQA). A disulfide bridge links Cys-21 with Cys-26. Pro-27 carries the 4-hydroxyproline; partial; in Conopressin-ba1c modification. The residue at position 29 (Gly-29) is a Glycine amide. 7 cysteine pairs are disulfide-bonded: Cys-43/Cys-83, Cys-46/Cys-57, Cys-51/Cys-73, Cys-58/Cys-63, Cys-90/Cys-108, Cys-102/Cys-120, and Cys-109/Cys-114.

Belongs to the vasopressin/oxytocin family. As to expression, expressed by the venom duct.

It is found in the secreted. The chain is Conopressin-conophysin from Conus bayani (Bayan's cone).